The following is a 446-amino-acid chain: tRNA-2-methylthio-N(6)-dimethylallyladenosine synthase (446 aa).

The MTTase N-terminal domain maps to 3-120 (KKIYIKTFGC…LPEMLKQRRS (118 aa)). Residues Cys-12, Cys-49, Cys-83, Cys-157, Cys-161, and Cys-164 each contribute to the [4Fe-4S] cluster site. Residues 143-375 (KVEGATAFVS…QAVIDQNTRR (233 aa)) form the Radical SAM core domain. The TRAM domain occupies 378–444 (DEMVGSVQRI…AYTLRGEIVV (67 aa)).

It belongs to the methylthiotransferase family. MiaB subfamily. In terms of assembly, monomer. It depends on [4Fe-4S] cluster as a cofactor.

Its subcellular location is the cytoplasm. It catalyses the reaction N(6)-dimethylallyladenosine(37) in tRNA + (sulfur carrier)-SH + AH2 + 2 S-adenosyl-L-methionine = 2-methylsulfanyl-N(6)-dimethylallyladenosine(37) in tRNA + (sulfur carrier)-H + 5'-deoxyadenosine + L-methionine + A + S-adenosyl-L-homocysteine + 2 H(+). In terms of biological role, catalyzes the methylthiolation of N6-(dimethylallyl)adenosine (i(6)A), leading to the formation of 2-methylthio-N6-(dimethylallyl)adenosine (ms(2)i(6)A) at position 37 in tRNAs that read codons beginning with uridine. The polypeptide is tRNA-2-methylthio-N(6)-dimethylallyladenosine synthase (Herminiimonas arsenicoxydans).